A 502-amino-acid polypeptide reads, in one-letter code: AMP phosphorylase (502 aa).

Residues Gly-168, 195–200 (SRAITS), and Thr-204 each bind AMP. Residue Asp-257 is the Proton donor of the active site. AMP contacts are provided by Ser-265 and Lys-289.

This sequence belongs to the thymidine/pyrimidine-nucleoside phosphorylase family. Type 2 subfamily.

The catalysed reaction is AMP + phosphate = alpha-D-ribose 1,5-bisphosphate + adenine. It catalyses the reaction CMP + phosphate = cytosine + alpha-D-ribose 1,5-bisphosphate. The enzyme catalyses UMP + phosphate = alpha-D-ribose 1,5-bisphosphate + uracil. Functionally, catalyzes the conversion of AMP and phosphate to adenine and ribose 1,5-bisphosphate (R15P). Exhibits phosphorylase activity toward CMP and UMP in addition to AMP. Functions in an archaeal AMP degradation pathway, together with R15P isomerase and RubisCO. The chain is AMP phosphorylase from Hyperthermus butylicus (strain DSM 5456 / JCM 9403 / PLM1-5).